The following is a 312-amino-acid chain: tRNA pseudouridine synthase B (312 aa).

Catalysis depends on D48, which acts as the Nucleophile.

The protein belongs to the pseudouridine synthase TruB family. Type 1 subfamily.

It catalyses the reaction uridine(55) in tRNA = pseudouridine(55) in tRNA. Its function is as follows. Responsible for synthesis of pseudouridine from uracil-55 in the psi GC loop of transfer RNAs. In Haemophilus influenzae (strain ATCC 51907 / DSM 11121 / KW20 / Rd), this protein is tRNA pseudouridine synthase B.